A 262-amino-acid chain; its full sequence is Thiazole synthase (262 aa).

Lysine 96 acts as the Schiff-base intermediate with DXP in catalysis. 1-deoxy-D-xylulose 5-phosphate-binding positions include glycine 157, 184–185 (AG), and 206–207 (NT).

The protein belongs to the ThiG family. Homotetramer. Forms heterodimers with either ThiH or ThiS.

Its subcellular location is the cytoplasm. The enzyme catalyses [ThiS sulfur-carrier protein]-C-terminal-Gly-aminoethanethioate + 2-iminoacetate + 1-deoxy-D-xylulose 5-phosphate = [ThiS sulfur-carrier protein]-C-terminal Gly-Gly + 2-[(2R,5Z)-2-carboxy-4-methylthiazol-5(2H)-ylidene]ethyl phosphate + 2 H2O + H(+). It functions in the pathway cofactor biosynthesis; thiamine diphosphate biosynthesis. In terms of biological role, catalyzes the rearrangement of 1-deoxy-D-xylulose 5-phosphate (DXP) to produce the thiazole phosphate moiety of thiamine. Sulfur is provided by the thiocarboxylate moiety of the carrier protein ThiS. In vitro, sulfur can be provided by H(2)S. This is Thiazole synthase from Legionella pneumophila (strain Corby).